The following is a 1384-amino-acid chain: RRP12-like protein (1384 aa).

The segment covering 1–13 has biased composition (basic residues); the sequence is MGKFRSKLKRNGK. A disordered region spans residues 1 to 32; sequence MGKFRSKLKRNGKGKTWSRGESATSNPTQMKH. A compositionally biased stretch (polar residues) spans 19–29; it reads RGESATSNPTQ. A phosphoserine mark is found at S82, S85, S96, S1094, S1095, S1117, and S1119. Disordered regions lie at residues 1082-1102, 1114-1155, and 1176-1384; these read LRKK…LVSG, LADS…IRED, and SAQT…KKYK. 2 stretches are compositionally biased toward acidic residues: residues 1090 to 1099 and 1114 to 1127; these read AQEDSSDDEL and LADS…DMDA. Positions 1176 to 1191 are enriched in polar residues; the sequence is SAQTATPAQSQKTKAQ. Phosphoserine is present on residues S1221, S1225, S1227, S1230, S1250, and S1251. Composition is skewed to polar residues over residues 1276-1285 and 1297-1315; these read SGKTTASSRY and TAGN…TSRP. Residues 1321–1334 are compositionally biased toward basic and acidic residues; that stretch reads GSKKAKGDMKKSGK. The segment covering 1348–1362 has biased composition (basic residues); it reads LNKRKRSMNSRKFKS. The span at 1369–1378 shows a compositional bias: gly residues; sequence AENGGAGGGR.

The protein belongs to the RRP12 family.

It localises to the nucleus. This chain is RRP12-like protein, found in Drosophila melanogaster (Fruit fly).